The chain runs to 733 residues: Methionine--tRNA ligase (733 aa).

Residues 11-21 (PYANGPIHAGH) carry the 'HIGH' region motif. Zn(2+)-binding residues include Cys-143, Cys-146, Cys-156, and Cys-159. The 'KMSKS' region motif lies at 345 to 349 (KFSTS). Residue Thr-348 participates in ATP binding. One can recognise a tRNA-binding domain in the interval 633–733 (DFMKLDLRVG…KEVKLGARIR (101 aa)).

Belongs to the class-I aminoacyl-tRNA synthetase family. MetG type 1 subfamily. In terms of assembly, homodimer. The cofactor is Zn(2+).

Its subcellular location is the cytoplasm. It carries out the reaction tRNA(Met) + L-methionine + ATP = L-methionyl-tRNA(Met) + AMP + diphosphate. Functionally, is required not only for elongation of protein synthesis but also for the initiation of all mRNA translation through initiator tRNA(fMet) aminoacylation. The sequence is that of Methionine--tRNA ligase from Thermococcus onnurineus (strain NA1).